Consider the following 585-residue polypeptide: MAGUK p55 subfamily member 3 (585 aa).

L27 domains lie at Glu-6–Ser-60 and Pro-61–Val-118. The PDZ domain maps to Ile-137–Leu-212. Residues Glu-226–Leu-296 enclose the SH3 domain. At Ser-307 the chain carries Phosphoserine. Positions Pro-385–Glu-570 constitute a Guanylate kinase-like domain.

The protein belongs to the MAGUK family. In terms of assembly, interacts with HTR2C; this interaction stabilizes the receptor at the plasma membrane and prevents the desensitization of the HTR2C receptor-mediated calcium response. Interacts with HTR2A. Interacts with HTR4. Interacts (via PDZ domain) with CADM1 (via C-terminus)Interacts (via PDZ domain) with CADM1; this interaction connects CADM1 with DLG1. Interacts (via Guanylate kinase-like domain) with PALS1. Interacts with DLG1 (via N-terminus); this interaction connects CADM1 with DLG1 and links CADM1 with the regulatory subunit of phosphoinositide-3-kinase (PI3K) by forming a multiprotein complex and participates in cell spreading. Expressed in retina (at protein level) at the subapical region (SAR) adjacent to adherens junctions at the OLM, and at the OPL.

It localises to the cell membrane. It is found in the apical cell membrane. The protein localises to the cell junction. Its subcellular location is the adherens junction. Functionally, participates in cell spreading through the phosphoinositide-3-kinase (PI3K) pathway by connecting CADM1 to DLG1 and the regulatory subunit of phosphoinositide-3-kinase (PI3K). Stabilizes HTR2C at the plasma membrane and prevents its desensitization. May participates in the maintenance of adherens junctions. The polypeptide is MAGUK p55 subfamily member 3 (Homo sapiens (Human)).